A 223-amino-acid polypeptide reads, in one-letter code: Endonuclease V (223 aa).

Positions 35 and 103 each coordinate Mg(2+).

This sequence belongs to the endonuclease V family. It depends on Mg(2+) as a cofactor.

It is found in the cytoplasm. It catalyses the reaction Endonucleolytic cleavage at apurinic or apyrimidinic sites to products with a 5'-phosphate.. Functionally, DNA repair enzyme involved in the repair of deaminated bases. Selectively cleaves double-stranded DNA at the second phosphodiester bond 3' to a deoxyinosine leaving behind the intact lesion on the nicked DNA. The polypeptide is Endonuclease V (Escherichia coli O139:H28 (strain E24377A / ETEC)).